We begin with the raw amino-acid sequence, 164 residues long: Endoribonuclease YbeY (164 aa).

The Zn(2+) site is built by His-114, His-118, and His-124.

Belongs to the endoribonuclease YbeY family. It depends on Zn(2+) as a cofactor.

Its subcellular location is the cytoplasm. Single strand-specific metallo-endoribonuclease involved in late-stage 70S ribosome quality control and in maturation of the 3' terminus of the 16S rRNA. The polypeptide is Endoribonuclease YbeY (Mycoplasmoides gallisepticum (strain R(low / passage 15 / clone 2)) (Mycoplasma gallisepticum)).